The sequence spans 203 residues: ATP-dependent Clp protease proteolytic subunit 1 (203 aa).

The Nucleophile role is filled by Ser103. The active site involves His128.

The protein belongs to the peptidase S14 family. As to quaternary structure, fourteen ClpP subunits assemble into 2 heptameric rings which stack back to back to give a disk-like structure with a central cavity, resembling the structure of eukaryotic proteasomes.

The protein resides in the cytoplasm. It carries out the reaction Hydrolysis of proteins to small peptides in the presence of ATP and magnesium. alpha-casein is the usual test substrate. In the absence of ATP, only oligopeptides shorter than five residues are hydrolyzed (such as succinyl-Leu-Tyr-|-NHMec, and Leu-Tyr-Leu-|-Tyr-Trp, in which cleavage of the -Tyr-|-Leu- and -Tyr-|-Trp bonds also occurs).. In terms of biological role, cleaves peptides in various proteins in a process that requires ATP hydrolysis. Has a chymotrypsin-like activity. Plays a major role in the degradation of misfolded proteins. The sequence is that of ATP-dependent Clp protease proteolytic subunit 1 from Treponema pallidum (strain Nichols).